Here is a 503-residue protein sequence, read N- to C-terminus: Carboxyl-terminal PDZ ligand of neuronal nitric oxide synthase protein (503 aa).

One can recognise a PID domain in the interval 26 to 191; sequence FQHGISFEAK…ESERNSDGSG (166 aa). Residues 170–212 are disordered; the sequence is HTQQNADGQEDGESERNSDGSGDPGRQLTGAERVSTAAAEETD. Residues Ser-183, Ser-187, Ser-190, and Ser-262 each carry the phosphoserine modification. Residues 318–359 are a coiled coil; the sequence is AAEAAARLEAQARVHQLLLQNKDMLQHISLLVKQVQELELKL. 4 positions are modified to phosphoserine: Ser-367, Ser-370, Ser-397, and Ser-413. Residues 491–503 form an interaction with NOS1 region; that stretch reads QELGDSLDDEIAV. Residues 501-503 carry the PDZ-binding motif; the sequence is IAV.

In terms of assembly, interacts with the PDZ domain of NOS1 or the second PDZ domain of DLG4 through its C-terminus. Interacts with RASD1 and SYN1, SYN2 and SYN3 via its PID domain. Forms a ternary complex with NOS1 and SYN1. Forms a ternary complex with NOS1 and RASD1.

It localises to the cell projection. The protein localises to the filopodium. The protein resides in the podosome. In terms of biological role, adapter protein involved in neuronal nitric-oxide (NO) synthesis regulation via its association with nNOS/NOS1. The complex formed with NOS1 and synapsins is necessary for specific NO and synapsin functions at a presynaptic level. Mediates an indirect interaction between NOS1 and RASD1 leading to enhance the ability of NOS1 to activate RASD1. Competes with DLG4 for interaction with NOS1, possibly affecting NOS1 activity by regulating the interaction between NOS1 and DLG4. In kidney podocytes, plays a role in podosomes and filopodia formation through CDC42 activation. In Mus musculus (Mouse), this protein is Carboxyl-terminal PDZ ligand of neuronal nitric oxide synthase protein.